A 159-amino-acid chain; its full sequence is Putative 4-hydroxy-4-methyl-2-oxoglutarate aldolase (159 aa).

Substrate is bound by residues 78 to 81 (GDVI) and Arg-100. Residue Asp-101 coordinates a divalent metal cation.

It belongs to the class II aldolase/RraA-like family. As to quaternary structure, homotrimer. A divalent metal cation is required as a cofactor.

The enzyme catalyses 4-hydroxy-4-methyl-2-oxoglutarate = 2 pyruvate. It catalyses the reaction oxaloacetate + H(+) = pyruvate + CO2. Functionally, catalyzes the aldol cleavage of 4-hydroxy-4-methyl-2-oxoglutarate (HMG) into 2 molecules of pyruvate. Also contains a secondary oxaloacetate (OAA) decarboxylase activity due to the common pyruvate enolate transition state formed following C-C bond cleavage in the retro-aldol and decarboxylation reactions. In Mycobacterium sp. (strain KMS), this protein is Putative 4-hydroxy-4-methyl-2-oxoglutarate aldolase.